The following is a 73-amino-acid chain: Long neurotoxin 3 (73 aa).

5 cysteine pairs are disulfide-bonded: cysteine 3/cysteine 21, cysteine 14/cysteine 42, cysteine 27/cysteine 31, cysteine 46/cysteine 57, and cysteine 58/cysteine 63.

It belongs to the three-finger toxin family. Long-chain subfamily. Type II alpha-neurotoxin sub-subfamily. Expressed by the venom gland.

It is found in the secreted. Its function is as follows. Binds with high affinity to muscular (alpha-1/CHRNA1) and neuronal (alpha-7/CHRNA7) nicotinic acetylcholine receptor (nAChR) and inhibits acetylcholine from binding to the receptor, thereby impairing neuromuscular and neuronal transmission. The protein is Long neurotoxin 3 of Ophiophagus hannah (King cobra).